Here is a 172-residue protein sequence, read N- to C-terminus: Large ribosomal subunit protein uL10 (172 aa).

This sequence belongs to the universal ribosomal protein uL10 family. In terms of assembly, part of the ribosomal stalk of the 50S ribosomal subunit. The N-terminus interacts with L11 and the large rRNA to form the base of the stalk. The C-terminus forms an elongated spine to which L12 dimers bind in a sequential fashion forming a multimeric L10(L12)X complex.

In terms of biological role, forms part of the ribosomal stalk, playing a central role in the interaction of the ribosome with GTP-bound translation factors. In Liberibacter africanus subsp. capensis, this protein is Large ribosomal subunit protein uL10 (rplJ).